A 242-amino-acid chain; its full sequence is Uridylate kinase (242 aa).

12–15 (KLSG) serves as a coordination point for ATP. Positions 20 to 25 (GEKGYG) are involved in allosteric activation by GTP. Gly55 lines the UMP pocket. Residues Gly56 and Arg60 each coordinate ATP. UMP is bound by residues Asp75 and 136–143 (TGNPYFST). ATP-binding residues include Tyr169 and Asp172.

This sequence belongs to the UMP kinase family. As to quaternary structure, homohexamer.

It is found in the cytoplasm. It catalyses the reaction UMP + ATP = UDP + ADP. The protein operates within pyrimidine metabolism; CTP biosynthesis via de novo pathway; UDP from UMP (UMPK route): step 1/1. Its activity is regulated as follows. Allosterically activated by GTP. Inhibited by UTP. Its function is as follows. Catalyzes the reversible phosphorylation of UMP to UDP. The polypeptide is Uridylate kinase (Carboxydothermus hydrogenoformans (strain ATCC BAA-161 / DSM 6008 / Z-2901)).